The sequence spans 422 residues: Cyclin-A2 (422 aa).

The residue at position 1 (M1) is an N-acetylmethionine. The segment at 1 to 62 (MPGTSRHSGR…APQQKLKTRR (62 aa)) is disordered. At S5 the chain carries Phosphoserine.

It belongs to the cyclin family. Cyclin AB subfamily. Interacts with the CDK1 and CDK2 protein kinases to form serine/threonine kinase holoenzyme complexes. Interacts with CDK1 (hyperphosphorylated form in G1 and underphosphorylated forms in S and G2). Interacts with CDK2; the interaction increases from G1 to G2. Interacts (associated with CDK2 but not with CDK1) with SCAPER; regulates the activity of CCNA2/CDK2 by transiently maintaining CCNA2 in the cytoplasm. Forms a ternary complex with CDK2 and CDKN1B; CDKN1B inhibits the kinase activity of CDK2 through conformational rearrangements. Interacts with INCA1. In terms of assembly, (Microbial infection) Interacts with mouse cytomegalovirus/MCMV kinase M97; this interaction sequesters CCNA2 to the cytoplasm. In terms of processing, polyubiquitinated via 'Lys-11'-linked ubiquitin by the anaphase-promoting complex (APC/C), leading to its degradation by the proteasome. Deubiquitinated and stabilized by USP37 enables entry into S phase. Ubiquitinated during the G1 phase by the SCF(FBXO31) complex, leading to its proteasomal degradation. Ubiquitous. In the testis, expressed in germ cells and in the ovary, in both germline and somatic cells.

The protein localises to the nucleus. It localises to the cytoplasm. Cyclin which controls both the G1/S and the G2/M transition phases of the cell cycle. Functions through the formation of specific serine/threonine kinase holoenzyme complexes with the cyclin-dependent protein kinases CDK1 and CDK2. The cyclin subunit confers the substrate specificity of these complexes and differentially interacts with and activates CDK1 and CDK2 throughout the cell cycle. The protein is Cyclin-A2 of Mus musculus (Mouse).